We begin with the raw amino-acid sequence, 391 residues long: Phosphoglycerate kinase (391 aa).

Substrate is bound by residues 21–23 (DLN), Arg-36, 59–62 (HLGR), Arg-114, and Arg-147. ATP is bound by residues Lys-198, Glu-315, and 344-347 (GGDT).

It belongs to the phosphoglycerate kinase family. In terms of assembly, monomer.

It localises to the cytoplasm. The catalysed reaction is (2R)-3-phosphoglycerate + ATP = (2R)-3-phospho-glyceroyl phosphate + ADP. It functions in the pathway carbohydrate degradation; glycolysis; pyruvate from D-glyceraldehyde 3-phosphate: step 2/5. This Haemophilus ducreyi (strain 35000HP / ATCC 700724) protein is Phosphoglycerate kinase.